The following is a 303-amino-acid chain: Target of rapamycin complex subunit LST8 (303 aa).

7 WD repeats span residues 1-27, 30-68, 73-112, 114-153, 157-196, 205-244, and 248-287; these read MSVI…CSRT, HSDS…PNPV, GHRG…IPRN, KHNA…CTHQ, EDDT…DASH, AHST…KLET, and GHQR…IVRQ.

Belongs to the WD repeat LST8 family. In terms of assembly, the target of rapamycin complex 1 (TORC1) is composed of at least KOG1, LST8, TCO89 and either TOR1 (TORC1-A) or TOR2 (TORC1-B). TORC1 binds to and is inhibited by FKBP-rapamycin. Interacts with PIB2; following activation of PIB2 by glutamine or cysteine and as part of the TORC1 complex. The target of rapamycin complex 2 (TORC2) is composed of at least AVO1, AVO2, BIT61, LST8, TOR2 and TSC11. TORC2 forms a homodimer. Contrary to TORC1, TORC2 does not bind to and is not sensitive to FKBP-rapamycin. LST8 binds to the C-terminal kinase domain in TOR2.

It is found in the cell membrane. Its subcellular location is the vacuole membrane. Functionally, essential component of both TORC1 and TORC2. TORC1 regulates multiple cellular processes to control cell growth in response to environmental signals. Nutrient limitation and environmental stress signals cause inactivation of TORC1. Active TORC1 positively controls ribosome biogenesis via control of rRNA, ribosomal protein and tRNA gene expression, and rRNA processing. TORC1 positively controls protein biosynthesis by regulation of mRNA stability, translation initiation factor activity, and high-affinity amino acid permeases that serve to provide amino acids for use by the translation machinery. TORC1 also promotes growth by sequestering a number of nutrient and general stress-responsive transcription factors in the cytoplasm. TORC1 negatively controls macroautophagy, a process to recycle surplus cytoplasmic mass under nutrient starvation conditions. LST8 is involved in the negative regulation of transcription factors GLN3 and RTG1-RTG3, limiting the synthesis of alpha-ketoglutarate, glutamate and glutamine. LST8 is required for targeting of amino acid permeases (AAPs) to the plasma membrane. TORC2 regulates cell cycle-dependent polarization of the actin-cytoskeleton, cell wall integrity, and receptor endocytosis. TORC2 controls polarity of the actin cytoskeleton, which is required for orienting the secretory pathway toward discrete growth sites, via the RHO1/PKC1/MAPK cell integrity pathway. LST8 is involved in maintenance of cell wall integrity. LST8 modulates TOR2 kinase activity. The polypeptide is Target of rapamycin complex subunit LST8 (Saccharomyces cerevisiae (strain ATCC 204508 / S288c) (Baker's yeast)).